We begin with the raw amino-acid sequence, 154 residues long: Ascorbate-specific PTS system EIIA component (154 aa).

In terms of domain architecture, PTS EIIA type-2 spans 6-150 (SLAENKSIRL…QEVLDLIDRT (145 aa)). His-68 acts as the Tele-phosphohistidine intermediate in catalysis. His-68 carries the post-translational modification Phosphohistidine.

The protein localises to the cytoplasm. Functionally, the phosphoenolpyruvate-dependent sugar phosphotransferase system (sugar PTS), a major carbohydrate active transport system, catalyzes the phosphorylation of incoming sugar substrates concomitantly with their translocation across the cell membrane. The enzyme II UlaABC PTS system is involved in ascorbate transport. This chain is Ascorbate-specific PTS system EIIA component (ulaC), found in Escherichia coli O157:H7.